The primary structure comprises 310 residues: tRNA dimethylallyltransferase (310 aa).

Residue 19–26 (GPTGTGKS) participates in ATP binding. 21–26 (TGTGKS) contacts substrate.

The protein belongs to the IPP transferase family. Monomer. Mg(2+) is required as a cofactor.

The enzyme catalyses adenosine(37) in tRNA + dimethylallyl diphosphate = N(6)-dimethylallyladenosine(37) in tRNA + diphosphate. In terms of biological role, catalyzes the transfer of a dimethylallyl group onto the adenine at position 37 in tRNAs that read codons beginning with uridine, leading to the formation of N6-(dimethylallyl)adenosine (i(6)A). The protein is tRNA dimethylallyltransferase of Saccharopolyspora erythraea (strain ATCC 11635 / DSM 40517 / JCM 4748 / NBRC 13426 / NCIMB 8594 / NRRL 2338).